The following is a 278-amino-acid chain: FALAHMVNDFDIMKSYLDEGANGIETDITFSPEGEPESAFHGVPCDCKRWCDRTVSFDSYLQKTSDLSTPGHPDYRENLLIIILELKLNGLSQDALANGGRRLADKLAAHFWTGGRRDQRATFVVSVPQTSQKVFMKTFREEMEAIGMGDMNAKVGFDFTDNGDVSVTKAVYDELGITEHIWASDGITNCVALLFRGTSRLEELIQKRDEGESTYISKVYAWTYDKETSVVLALELGVDGVMTNYADFVISILNKPEHSSKYRLATYEDDPFERFKAV.

The active site involves His-5. Glu-25 and Asp-27 together coordinate Mg(2+). His-41 functions as the Nucleophile in the catalytic mechanism. 2 cysteine pairs are disulfide-bonded: Cys-45–Cys-51 and Cys-47–Cys-190. Glu-85 is a Mg(2+) binding site.

Belongs to the arthropod phospholipase D family. Class II subfamily. Mg(2+) serves as cofactor. Expressed by the venom gland.

Its subcellular location is the secreted. The catalysed reaction is an N-(acyl)-sphingosylphosphocholine = an N-(acyl)-sphingosyl-1,3-cyclic phosphate + choline. It carries out the reaction an N-(acyl)-sphingosylphosphoethanolamine = an N-(acyl)-sphingosyl-1,3-cyclic phosphate + ethanolamine. It catalyses the reaction a 1-acyl-sn-glycero-3-phosphocholine = a 1-acyl-sn-glycero-2,3-cyclic phosphate + choline. The enzyme catalyses a 1-acyl-sn-glycero-3-phosphoethanolamine = a 1-acyl-sn-glycero-2,3-cyclic phosphate + ethanolamine. Its function is as follows. Dermonecrotic toxins cleave the phosphodiester linkage between the phosphate and headgroup of certain phospholipids (sphingolipid and lysolipid substrates), forming an alcohol (often choline) and a cyclic phosphate. This toxin acts on sphingomyelin (SM). It may also act on ceramide phosphoethanolamine (CPE), lysophosphatidylcholine (LPC) and lysophosphatidylethanolamine (LPE), but not on lysophosphatidylserine (LPS), and lysophosphatidylglycerol (LPG). It acts by transphosphatidylation, releasing exclusively cyclic phosphate products as second products. Induces dermonecrosis, hemolysis, increased vascular permeability, edema, inflammatory response, and platelet aggregation. In Loxosceles spinulosa (Recluse spider), this protein is Dermonecrotic toxin LspiSicTox-betaIE2i.